We begin with the raw amino-acid sequence, 374 residues long: Tuliposide A-converting enzyme b1, amyloplastic (374 aa).

The N-terminal 68 residues, M1–T68, are a transit peptide targeting the amyloplast. S226 functions as the Acyl-ester intermediate in the catalytic mechanism. Active-site charge relay system residues include D316 and H348.

It belongs to the AB hydrolase superfamily. Homodimer. As to expression, highly expressed in pistil and bulb scales. Lower expression in stem, and barely detected in root, leaf, petal and stamen.

It is found in the plastid. It localises to the amyloplast. The catalysed reaction is 6-tuliposide A = tulipalin A + D-glucose. Functionally, lactone-forming carboxylesterases, specifically catalyzing intramolecular transesterification, but not hydrolysis. Involved in the biosynthesis of tulipalins, defensive chemicals that show antimicrobial activities against a broad range of strains of bacteria and fungi. Substrates are 6-tuliposide A &gt; 6-tuliposide B. In Tulipa gesneriana (Garden tulip), this protein is Tuliposide A-converting enzyme b1, amyloplastic (TCEA-B1).